Here is a 53-residue protein sequence, read N- to C-terminus: Small ribosomal subunit protein uS14 (53 aa).

4 residues coordinate Zn(2+): Cys-17, Cys-20, Cys-36, and Cys-39.

Belongs to the universal ribosomal protein uS14 family. Zinc-binding uS14 subfamily. Part of the 30S ribosomal subunit. The cofactor is Zn(2+).

Functionally, binds 16S rRNA, required for the assembly of 30S particles. The sequence is that of Small ribosomal subunit protein uS14 from Methanococcus maripaludis (strain DSM 14266 / JCM 13030 / NBRC 101832 / S2 / LL).